The chain runs to 355 residues: 3-dehydroquinate synthase (355 aa).

NAD(+) is bound by residues 71-76, 105-109, 129-130, K142, and K151; these read EGEERK, GVVGD, and TS. Zn(2+)-binding residues include E184, H246, and H263.

Belongs to the sugar phosphate cyclases superfamily. Dehydroquinate synthase family. The cofactor is Co(2+). Zn(2+) is required as a cofactor. NAD(+) serves as cofactor.

Its subcellular location is the cytoplasm. It catalyses the reaction 7-phospho-2-dehydro-3-deoxy-D-arabino-heptonate = 3-dehydroquinate + phosphate. The protein operates within metabolic intermediate biosynthesis; chorismate biosynthesis; chorismate from D-erythrose 4-phosphate and phosphoenolpyruvate: step 2/7. Its function is as follows. Catalyzes the conversion of 3-deoxy-D-arabino-heptulosonate 7-phosphate (DAHP) to dehydroquinate (DHQ). This chain is 3-dehydroquinate synthase, found in Streptococcus pneumoniae (strain 70585).